The primary structure comprises 309 residues: Manganese ABC transporter substrate-binding lipoprotein PsaA (309 aa).

Positions 1 to 19 (MKKLGTLFVLFLSVIVLVA) are cleaved as a signal peptide. Cysteine 20 carries N-palmitoyl cysteine lipidation. Cysteine 20 carries S-diacylglycerol cysteine lipidation. Positions 67, 139, 205, and 280 each coordinate Mn(2+).

The protein belongs to the bacterial solute-binding protein 9 family. Lipoprotein receptor antigen (Lrai) subfamily.

The protein resides in the cell membrane. Functionally, part of the ATP-riven (ABC) transport system PsaABC involved in manganese import. Binds manganese with high affinity and specificity and delivers it to the membrane permease for translocation into the cytoplasm. Also acts as an adhesin which is involved on adherence to extracellular matrix. The sequence is that of Manganese ABC transporter substrate-binding lipoprotein PsaA (psaA) from Streptococcus mitis.